A 330-amino-acid chain; its full sequence is MWLLVSVILISRISSVGGEATFCDFPKINHGILYDEEKYKPFSQVPTGEVFYYSCEYNFVSPSKSFWTRITCTEEGWSPTPKCLRLCFFPFVENGHSESSGQTHLEGDTVQIICNTGYRLQNNENNISCVERGWSTPPKCRSTDTSCVNPPTVQNAHILSRQMSKYPSGERVRYECRSPYEMFGDEEVMCLNGNWTEPPQCKDSTGKCGPPPPIDNGDITSFPLSVYAPASSVEYQCQNLYQLEGNKRITCRNGQWSEPPKCLHPCVISREIMENYNIALRWTAKQKLYLRTGESAEFVCKRGYRLSSRSHTLRTTCWDGKLEYPTCAKR.

A signal peptide spans 1-18 (MWLLVSVILISRISSVGG). Sushi domains are found at residues 22 to 84 (FCDF…PKCL), 85 to 142 (RLCF…KCRS), 145 to 203 (TSCV…QCKD), 206 to 264 (GKCG…KCLH), and 273 to 329 (MENY…TCAK). Cystine bridges form between Cys-23-Cys-72, Cys-55-Cys-83, Cys-87-Cys-129, Cys-114-Cys-140, Cys-147-Cys-190, Cys-176-Cys-201, Cys-208-Cys-251, Cys-237-Cys-262, Cys-266-Cys-317, and Cys-300-Cys-327. Residue Asn-126 is glycosylated (N-linked (GlcNAc...) asparagine). Asn-194 carries an N-linked (GlcNAc...) asparagine glycan.

Head-to-tail homodimer and heterodimer with CFHR2 or CFHR5. As to quaternary structure, (Microbial infection) Interacts with C.albicans GPD2; the interaction is direct and leads to the degradation of C3. Post-translationally, N-glycosylated. Two forms are observed; one with a single side chain and the other with two. In terms of tissue distribution, expressed by the liver and secreted in plasma.

Its subcellular location is the secreted. Involved in complement regulation. The dimerized forms have avidity for tissue-bound complement fragments and efficiently compete with the physiological complement inhibitor CFH. Can associate with lipoproteins and may play a role in lipid metabolism. The protein is Complement factor H-related protein 1 (CFHR1) of Homo sapiens (Human).